Here is an 85-residue protein sequence, read N- to C-terminus: Colicin E3 immunity protein (85 aa).

It belongs to the cloacin immunity protein family. As to quaternary structure, native colicin E3 is a 1:1 complex of A chain and protein B (Im3). Binds between the translocation and cytotoxic RNase domains of intact ColE3, blocking access to the 16S rRNA substrate. Forms a very tight 1:1 complex with the cytotoxic fragment (residues 456-551) of ColE3 (ceaC).

Functionally, the cognate immunity protein for colicin E3 (ColE3), protects cells which harbor the plasmid ColE3 against the toxic action of ColE3. This protein inhibits the 16S RNA hydrolyzing activity of ColE3 by binding with very high affinity to the C-terminal catalytic domain of ColE3. The chain is Colicin E3 immunity protein from Escherichia coli.